The sequence spans 136 residues: NADPH-dependent 7-cyano-7-deazaguanine reductase (136 aa).

Cys-53 serves as the catalytic Thioimide intermediate. Asp-60 functions as the Proton donor in the catalytic mechanism. Substrate contacts are provided by residues 75 to 77 (VEL) and 94 to 95 (HE).

It belongs to the GTP cyclohydrolase I family. QueF type 1 subfamily.

The protein localises to the cytoplasm. The catalysed reaction is 7-aminomethyl-7-carbaguanine + 2 NADP(+) = 7-cyano-7-deazaguanine + 2 NADPH + 3 H(+). Its pathway is tRNA modification; tRNA-queuosine biosynthesis. Catalyzes the NADPH-dependent reduction of 7-cyano-7-deazaguanine (preQ0) to 7-aminomethyl-7-deazaguanine (preQ1). This is NADPH-dependent 7-cyano-7-deazaguanine reductase from Trichormus variabilis (strain ATCC 29413 / PCC 7937) (Anabaena variabilis).